We begin with the raw amino-acid sequence, 313 residues long: Formimidoylglutamase (313 aa).

Mn(2+) contacts are provided by H130, D155, H157, D159, D241, and D243.

The protein belongs to the arginase family. Mn(2+) is required as a cofactor.

The enzyme catalyses N-formimidoyl-L-glutamate + H2O = formamide + L-glutamate. It participates in amino-acid degradation; L-histidine degradation into L-glutamate; L-glutamate from N-formimidoyl-L-glutamate (hydrolase route): step 1/1. Catalyzes the conversion of N-formimidoyl-L-glutamate to L-glutamate and formamide. This chain is Formimidoylglutamase, found in Salmonella schwarzengrund (strain CVM19633).